Reading from the N-terminus, the 750-residue chain is Photosystem I P700 chlorophyll a apoprotein A1 (750 aa).

Transmembrane regions (helical) follow at residues 70-93 (VFSA…FHGA), 156-179 (LYCT…FHYH), 195-219 (LNHH…HVSL), 291-309 (IAHH…GHMY), 346-369 (WHAQ…HHMY), 385-411 (LSLF…IFMV), 433-455 (AIIS…LYIH), and 531-549 (FLVH…LILL). [4Fe-4S] cluster is bound by residues Cys573 and Cys582. 2 helical membrane-spanning segments follow: residues 589–610 (HVFL…HFSW) and 664–686 (LSAY…MFLF). His675 is a chlorophyll a' binding site. Chlorophyll a-binding residues include Met683 and Tyr691. Phylloquinone is bound at residue Trp692. A helical transmembrane segment spans residues 724 to 744 (AVGVTHYLLGGIATTWAFFLA).

Belongs to the PsaA/PsaB family. As to quaternary structure, the PsaA/B heterodimer binds the P700 chlorophyll special pair and subsequent electron acceptors. PSI consists of a core antenna complex that captures photons, and an electron transfer chain that converts photonic excitation into a charge separation. The eukaryotic PSI reaction center is composed of at least 11 subunits. The cofactor is P700 is a chlorophyll a/chlorophyll a' dimer, A0 is one or more chlorophyll a, A1 is one or both phylloquinones and FX is a shared 4Fe-4S iron-sulfur center..

The protein localises to the plastid. Its subcellular location is the chloroplast thylakoid membrane. It carries out the reaction reduced [plastocyanin] + hnu + oxidized [2Fe-2S]-[ferredoxin] = oxidized [plastocyanin] + reduced [2Fe-2S]-[ferredoxin]. Its function is as follows. PsaA and PsaB bind P700, the primary electron donor of photosystem I (PSI), as well as the electron acceptors A0, A1 and FX. PSI is a plastocyanin-ferredoxin oxidoreductase, converting photonic excitation into a charge separation, which transfers an electron from the donor P700 chlorophyll pair to the spectroscopically characterized acceptors A0, A1, FX, FA and FB in turn. Oxidized P700 is reduced on the lumenal side of the thylakoid membrane by plastocyanin. This chain is Photosystem I P700 chlorophyll a apoprotein A1, found in Vitis vinifera (Grape).